Here is a 384-residue protein sequence, read N- to C-terminus: Proteinase K (384 aa).

The signal sequence occupies residues 1-15 (MRLSVLLSLLPLALG). A propeptide spanning residues 16–105 (APAVEQRSEA…IEQDAVVTIN (90 aa)) is cleaved from the precursor. Positions 39-104 (KYIVKFKEGS…YIEQDAVVTI (66 aa)) constitute an Inhibitor I9 domain. The Peptidase S8 domain occupies 112–384 (PWGLARISST…NLLAYNNYQA (273 aa)). Thr-121 lines the Ca(2+) pocket. Residues Cys-139 and Cys-228 are joined by a disulfide bond. Catalysis depends on charge relay system residues Asp-144 and His-174. Ca(2+) is bound by residues Pro-280, Val-282, and Asp-305. Cys-283 and Cys-354 are oxidised to a cystine. Catalysis depends on Ser-329, which acts as the Charge relay system. Ca(2+) is bound at residue Asp-365.

The protein belongs to the peptidase S8 family. Requires Ca(2+) as cofactor.

The enzyme catalyses Hydrolysis of keratin, and of other proteins with subtilisin-like specificity. Hydrolyzes peptide amides.. Its function is as follows. Hydrolyzes keratin at aromatic and hydrophobic residues. This Parengyodontium album (Tritirachium album) protein is Proteinase K (PROK).